A 293-amino-acid polypeptide reads, in one-letter code: Ribonuclease HIII (293 aa).

Residues 78–293 (LPLIGTDEVG…TEKAKKRLER (216 aa)) form the RNase H type-2 domain. Residues Asp84, Glu85, and Asp187 each coordinate a divalent metal cation.

Belongs to the RNase HII family. RnhC subfamily. The cofactor is Mn(2+). Requires Mg(2+) as cofactor.

Its subcellular location is the cytoplasm. The enzyme catalyses Endonucleolytic cleavage to 5'-phosphomonoester.. Functionally, endonuclease that specifically degrades the RNA of RNA-DNA hybrids. This Streptococcus pneumoniae (strain JJA) protein is Ribonuclease HIII.